Here is a 288-residue protein sequence, read N- to C-terminus: 4-hydroxybenzoate octaprenyltransferase (288 aa).

8 helical membrane passes run 23–43, 46–66, 98–118, 141–161, 163–183, 213–233, 234–254, and 268–288; these read IGSL…GRGI, AKIL…GCVV, ILFV…NSMT, LPQV…FAAV, ESLP…TVAY, LIIG…GWLM, NLGG…THQQ, and AFLN…ISYW.

Belongs to the UbiA prenyltransferase family. The cofactor is Mg(2+).

It localises to the cell inner membrane. It carries out the reaction all-trans-octaprenyl diphosphate + 4-hydroxybenzoate = 4-hydroxy-3-(all-trans-octaprenyl)benzoate + diphosphate. Its pathway is cofactor biosynthesis; ubiquinone biosynthesis. Its function is as follows. Catalyzes the prenylation of para-hydroxybenzoate (PHB) with an all-trans polyprenyl group. Mediates the second step in the final reaction sequence of ubiquinone-8 (UQ-8) biosynthesis, which is the condensation of the polyisoprenoid side chain with PHB, generating the first membrane-bound Q intermediate 3-octaprenyl-4-hydroxybenzoate. The protein is 4-hydroxybenzoate octaprenyltransferase of Yersinia pseudotuberculosis serotype O:1b (strain IP 31758).